Reading from the N-terminus, the 254-residue chain is Thiazole synthase (254 aa).

Residue Lys96 is the Schiff-base intermediate with DXP of the active site. Residues Gly157, 183–184, and 205–206 contribute to the 1-deoxy-D-xylulose 5-phosphate site; these read AG and NT.

This sequence belongs to the ThiG family. Homotetramer. Forms heterodimers with either ThiH or ThiS.

The protein localises to the cytoplasm. The catalysed reaction is [ThiS sulfur-carrier protein]-C-terminal-Gly-aminoethanethioate + 2-iminoacetate + 1-deoxy-D-xylulose 5-phosphate = [ThiS sulfur-carrier protein]-C-terminal Gly-Gly + 2-[(2R,5Z)-2-carboxy-4-methylthiazol-5(2H)-ylidene]ethyl phosphate + 2 H2O + H(+). Its pathway is cofactor biosynthesis; thiamine diphosphate biosynthesis. In terms of biological role, catalyzes the rearrangement of 1-deoxy-D-xylulose 5-phosphate (DXP) to produce the thiazole phosphate moiety of thiamine. Sulfur is provided by the thiocarboxylate moiety of the carrier protein ThiS. In vitro, sulfur can be provided by H(2)S. This is Thiazole synthase from Clostridium kluyveri (strain ATCC 8527 / DSM 555 / NBRC 12016 / NCIMB 10680 / K1).